Reading from the N-terminus, the 299-residue chain is Transcription factor srbB (299 aa).

Disordered regions lie at residues M1 to S33 and I81 to K204. Low complexity predominate over residues P161–P170. Residues R188–G199 show a composition bias toward polar residues. Residues A203 to R216 form a basic motif region. The region spanning A203 to L264 is the bHLH domain. Positions T217 to L264 are helix-loop-helix motif. A coiled-coil region spans residues L254–N281.

The protein localises to the nucleus. Key transcription factors critical for hypoxia adaptation and virulence. Plays a major role in regulation of heme biosynthesis and carbohydrate metabolism early in the response to hypoxia. The chain is Transcription factor srbB from Aspergillus fumigatus (strain ATCC MYA-4609 / CBS 101355 / FGSC A1100 / Af293) (Neosartorya fumigata).